We begin with the raw amino-acid sequence, 378 residues long: tRNA-specific 2-thiouridylase MnmA (378 aa).

ATP-binding positions include 12–19 (GLSGGVDS) and methionine 38. Residues 98-100 (NPD) are interaction with target base in tRNA. Cysteine 103 (nucleophile) is an active-site residue. A disulfide bridge connects residues cysteine 103 and cysteine 201. Residue glycine 127 coordinates ATP. The tract at residues 151 to 153 (KDQ) is interaction with tRNA. Cysteine 201 functions as the Cysteine persulfide intermediate in the catalytic mechanism. The interval 319-320 (RY) is interaction with tRNA.

The protein belongs to the MnmA/TRMU family.

It is found in the cytoplasm. It carries out the reaction S-sulfanyl-L-cysteinyl-[protein] + uridine(34) in tRNA + AH2 + ATP = 2-thiouridine(34) in tRNA + L-cysteinyl-[protein] + A + AMP + diphosphate + H(+). Catalyzes the 2-thiolation of uridine at the wobble position (U34) of tRNA, leading to the formation of s(2)U34. This is tRNA-specific 2-thiouridylase MnmA from Paracidovorax citrulli (strain AAC00-1) (Acidovorax citrulli).